The primary structure comprises 635 residues: Early transcription factor 70 kDa subunit (635 aa).

The region spanning 32–185 (RSIIDENKSV…SNIISLMSDE (154 aa)) is the Helicase ATP-binding domain. 45-52 (HIMGSGKT) contributes to the ATP binding site. The short motif at 135–138 (DEAH) is the DEXH box element. Residues 326–505 (KFKYFITKIE…TLPFDIKKLL (180 aa)) form the Helicase C-terminal domain.

This sequence belongs to the helicase family. VETF subfamily. Heterodimer of a 70 kDa and a 82 kDa subunit. Part of the early transcription complex composed of ETF, RAP94, and the DNA-directed RNA polymerase.

The protein localises to the virion. In terms of biological role, acts with RNA polymerase to initiate transcription from early gene promoters. Is recruited by the RPO-associated protein of 94 kDa (RAP94) to form the early transcription complex, which also contains the core RNA polymerase. ETF heterodimer binds to early gene promoters. The chain is Early transcription factor 70 kDa subunit (VETFS) from Oryctolagus cuniculus (Rabbit).